A 104-amino-acid polypeptide reads, in one-letter code: A-type ATP synthase subunit F (104 aa).

Belongs to the V-ATPase F subunit family. In terms of assembly, has multiple subunits with at least A(3), B(3), C, D, E, F, H, I and proteolipid K(x).

The protein localises to the cell membrane. Functionally, component of the A-type ATP synthase that produces ATP from ADP in the presence of a proton gradient across the membrane. The protein is A-type ATP synthase subunit F of Thermoplasma volcanium (strain ATCC 51530 / DSM 4299 / JCM 9571 / NBRC 15438 / GSS1).